Reading from the N-terminus, the 162-residue chain is MDETPELEKATFGAGCFWHVEAEFRRVSGVVATHAGYMGGWKDHPTYEEVCSKETGHAEVVEVVYDPARVSYDELLRIFWTIHDPTQLNRQGPDIGTNYRSVIFFHTPEQEQAARLSMEKEGGSGRYSRPIVTEIASASAFWWAEEYHQQYLEKRGGGSCNW.

The active site involves Cys16.

This sequence belongs to the MsrA Met sulfoxide reductase family.

It catalyses the reaction L-methionyl-[protein] + [thioredoxin]-disulfide + H2O = L-methionyl-(S)-S-oxide-[protein] + [thioredoxin]-dithiol. It carries out the reaction [thioredoxin]-disulfide + L-methionine + H2O = L-methionine (S)-S-oxide + [thioredoxin]-dithiol. In terms of biological role, has an important function as a repair enzyme for proteins that have been inactivated by oxidation. Catalyzes the reversible oxidation-reduction of methionine sulfoxide in proteins to methionine. The protein is Peptide methionine sulfoxide reductase MsrA of Geobacter metallireducens (strain ATCC 53774 / DSM 7210 / GS-15).